The sequence spans 510 residues: Amidophosphoribosyltransferase (510 aa).

Catalysis depends on cysteine 2, which acts as the Nucleophile. The Glutamine amidotransferase type-2 domain occupies 2–239 (CGILGIALAD…PGEAVIIPKD (238 aa)). Residues aspartate 373 and aspartate 374 each coordinate Mg(2+).

The protein in the C-terminal section; belongs to the purine/pyrimidine phosphoribosyltransferase family. Mg(2+) serves as cofactor.

It carries out the reaction 5-phospho-beta-D-ribosylamine + L-glutamate + diphosphate = 5-phospho-alpha-D-ribose 1-diphosphate + L-glutamine + H2O. Its pathway is purine metabolism; IMP biosynthesis via de novo pathway; N(1)-(5-phospho-D-ribosyl)glycinamide from 5-phospho-alpha-D-ribose 1-diphosphate: step 1/2. The chain is Amidophosphoribosyltransferase (ADE4) from Lachancea kluyveri (Yeast).